The following is a 605-amino-acid chain: Probable potassium transport system protein Kup 1 (605 aa).

The next 12 membrane-spanning stretches (helical) occupy residues 16 to 36 (ALGLVFGDIGTSPIYTLTVIF), 46 to 66 (VFGILSLVFWTMTILVTMEYA), 97 to 117 (VAFAGFLSFVGVSLLLGDGVI), 138 to 158 (GLSTGTLVAIAAAIAIGLFSV), 166 to 186 (VAGAFGPIMAVWFSTLAVTGV), 212 to 232 (GLAGYFVLSEVILCSTGGEAL), 248 to 268 (WYFVFMALYLNYLGQGVFAIT), 287 to 307 (LYIPFLILTIMATIIASQSII), 339 to 359 (IYLGAVNWSLMVAVILVMLLF), 368 to 388 (AYGMAVTGSMTITGIMMIIVF), 397 to 417 (ALVALVITLIDAAYLLSTFSK), and 418 to 438 (IPHGAYWSLILASIPFVTIII).

Belongs to the HAK/KUP transporter (TC 2.A.72) family.

Its subcellular location is the cell inner membrane. The catalysed reaction is K(+)(in) + H(+)(in) = K(+)(out) + H(+)(out). Its function is as follows. Transport of potassium into the cell. Likely operates as a K(+):H(+) symporter. The sequence is that of Probable potassium transport system protein Kup 1 from Geobacter metallireducens (strain ATCC 53774 / DSM 7210 / GS-15).